A 209-amino-acid chain; its full sequence is C-type lectin domain family 6 member A (209 aa).

Over 1 to 20 the chain is Cytoplasmic; sequence MVQERHPQRKGVCWTLRLWS. A helical; Signal-anchor for type II membrane protein membrane pass occupies residues 21 to 43; it reads TAVISMLLLSTCFIASCMVTYQF. Residues 44-209 are Extracellular-facing; sequence TMEKPNRRLS…SICETKKIYL (166 aa). Disulfide bonds link Cys64-Cys78 and Cys79-Cys90. One can recognise a C-type lectin domain in the interval 86–203; it reads FGSSCYLIST…CDSKHNSICE (118 aa). Residues Val116, Asn118, and Glu122 each contribute to the Ca(2+) site. Asn131 is a glycosylation site (N-linked (GlcNAc...) asparagine). Glu168, Asn170, and Glu174 together coordinate Ca(2+). Alpha-D-mannopyranose-binding positions include 168-170, Glu174, Trp182, and 190-191; these read EPN and ND. Cys176 and Cys194 are joined by a disulfide. Positions 190, 191, and 203 each coordinate Ca(2+).

Associated with FCER1G. Heterodimer with CLEC4D; this heterodimer forms a pattern recognition receptor (PRR) against fungal infection.

It localises to the cell membrane. In terms of biological role, calcium-dependent lectin that acts as a pattern recognition receptor (PRR) of the innate immune system: specifically recognizes and binds alpha-mannans on C.albicans hypheas. Binding of C.albicans alpha-mannans to this receptor complex leads to phosphorylation of the immunoreceptor tyrosine-based activation motif (ITAM) of FCER1G, triggering activation of SYK, CARD9 and NF-kappa-B, consequently driving maturation of antigen-presenting cells and shaping antigen-specific priming of T-cells toward effector T-helper 1 and T-helper 17 cell subtypes. Also recognizes, in a mannose-dependent manner, allergens from house dust mite and fungi, by promoting cysteinyl leukotriene production. Recognizes soluble elements from the eggs of Shistosoma mansoni altering adaptive immune responses. The protein is C-type lectin domain family 6 member A (CLEC6A) of Rattus norvegicus (Rat).